A 460-amino-acid polypeptide reads, in one-letter code: MISAISSPWLTQLSHFCDVAAFTTSSLSSLNTPGSYHLSPSPGDPYSHHESQFEPCPAAQHAYNYSGSNSAQAPAQGDSGTSNCSSSSSSSTPNKTLVKKNPKVANINVQLEMKALWDEFNQLGTEMIVTKAGRRMFPTFQVKIFGMDPMADYMLLMDFLPVDDKRYRYAFHSSSWLVAGKADPATPGRVHYHPDSPAKGAQWMKQIVSFDKLKLTNNLLDDNGHIILNSMHRYQPRFHVVYVDPRKDSEKYAEENYKTFVFEETRFTAVTAYQNHRITQLKIASNPFAKGFRDCDPEDWPRNHRPGSLQIMSAFARTRNPMSSPPQQNGTEKEDSRREYDRDPSGNPLHSDPTHQLMSRVLSPALPVLGGLHAVPLTAGPRSPPHELRLDGHPQPPDTLHHHPYKYPATYEHYLGAKTRPSPYPSPSIRGHGYHPHMNPTTANMYSATSAPTNYDYGPR.

2 disordered regions span residues 30–53 and 67–99; these read LNTP…ESQF and GSNS…TLVK. Residues 67-84 are compositionally biased toward polar residues; it reads GSNSAQAPAQGDSGTSNC. A DNA-binding region (T-box) is located at residues 116–294; sequence LWDEFNQLGT…SNPFAKGFRD (179 aa). Disordered stretches follow at residues 317-355 and 376-400; these read RTRN…DPTH and PLTA…PDTL. A compositionally biased stretch (polar residues) spans 320–330; the sequence is NPMSSPPQQNG. Basic and acidic residues predominate over residues 331–344; that stretch reads TEKEDSRREYDRDP. Positions 418-429 match the Nuclear localization signal motif; the sequence is KTRPSPYPSPSI.

As to quaternary structure, binds DNA as a dimer. In terms of tissue distribution, expressed in the ear and mesendodermal components of pharyngeal arches.

Its subcellular location is the nucleus. Probable transcriptional regulator involved in developmental processes. Binds to the palindromic T site 5'-TTCACACCTAGGTGTGAA-3' DNA sequence. Is required for normal development of the pharyngeal arch arteries. Acts cell autonomously in the pharyngeal mesendoderm and influences the development of neural crest-derived cartilages secondarily. The chain is T-box transcription factor TBX1 (tbx1) from Danio rerio (Zebrafish).